The chain runs to 266 residues: Thiazole synthase (266 aa).

Residue K95 is the Schiff-base intermediate with DXP of the active site. 1-deoxy-D-xylulose 5-phosphate contacts are provided by residues G156, 182–183 (AG), and 204–205 (NT).

Belongs to the ThiG family. In terms of assembly, homotetramer. Forms heterodimers with either ThiH or ThiS.

Its subcellular location is the cytoplasm. It carries out the reaction [ThiS sulfur-carrier protein]-C-terminal-Gly-aminoethanethioate + 2-iminoacetate + 1-deoxy-D-xylulose 5-phosphate = [ThiS sulfur-carrier protein]-C-terminal Gly-Gly + 2-[(2R,5Z)-2-carboxy-4-methylthiazol-5(2H)-ylidene]ethyl phosphate + 2 H2O + H(+). It participates in cofactor biosynthesis; thiamine diphosphate biosynthesis. In terms of biological role, catalyzes the rearrangement of 1-deoxy-D-xylulose 5-phosphate (DXP) to produce the thiazole phosphate moiety of thiamine. Sulfur is provided by the thiocarboxylate moiety of the carrier protein ThiS. In vitro, sulfur can be provided by H(2)S. This is Thiazole synthase from Shewanella denitrificans (strain OS217 / ATCC BAA-1090 / DSM 15013).